Reading from the N-terminus, the 102-residue chain is Small ribosomal subunit protein uS10 (102 aa).

This sequence belongs to the universal ribosomal protein uS10 family. In terms of assembly, part of the 30S ribosomal subunit.

Its function is as follows. Involved in the binding of tRNA to the ribosomes. The polypeptide is Small ribosomal subunit protein uS10 (Streptococcus thermophilus (strain ATCC BAA-491 / LMD-9)).